The primary structure comprises 195 residues: Protein GrpE (195 aa).

Basic and acidic residues predominate over residues 1-18; the sequence is MDPKEKKTKQEEELKVDD. A disordered region spans residues 1-41; the sequence is MDPKEKKTKQEEELKVDDIQDTVEGQSQNEEATEATEPLTA.

Belongs to the GrpE family. Homodimer.

The protein resides in the cytoplasm. Functionally, participates actively in the response to hyperosmotic and heat shock by preventing the aggregation of stress-denatured proteins, in association with DnaK and GrpE. It is the nucleotide exchange factor for DnaK and may function as a thermosensor. Unfolded proteins bind initially to DnaJ; upon interaction with the DnaJ-bound protein, DnaK hydrolyzes its bound ATP, resulting in the formation of a stable complex. GrpE releases ADP from DnaK; ATP binding to DnaK triggers the release of the substrate protein, thus completing the reaction cycle. Several rounds of ATP-dependent interactions between DnaJ, DnaK and GrpE are required for fully efficient folding. The polypeptide is Protein GrpE (Bacteroides fragilis (strain ATCC 25285 / DSM 2151 / CCUG 4856 / JCM 11019 / LMG 10263 / NCTC 9343 / Onslow / VPI 2553 / EN-2)).